Consider the following 122-residue polypeptide: MEDKPLVVSKQKTEVVCGVPTQVVCTAFSSHILVVVTQFGKMGTLVSLEPSNVANDISKPVLTTRVLLGQDEPLIHVFAKNLVAFVSQEAGNRAVLLAMAVKDKSMERLKALKEVIRLCQVW.

Residue Met-1 is modified to N-acetylmethionine.

Belongs to the PSMG3 family. In terms of assembly, homodimer. Interacts directly with alpha and beta subunits of the 20S proteasome but dissociates before the formation of half-proteasomes, probably upon recruitment of POMP. Interacts with PSMG4.

In terms of biological role, chaperone protein which promotes assembly of the 20S proteasome. May cooperate with PSMG1-PSMG2 heterodimers to orchestrate the correct assembly of proteasomes. The polypeptide is Proteasome assembly chaperone 3 (Psmg3) (Mus musculus (Mouse)).